The sequence spans 153 residues: Ribonuclease H (153 aa).

The 142-residue stretch at 1–142 (MRKKIEIFTD…CDELARIAAE (142 aa)) folds into the RNase H type-1 domain. Mg(2+)-binding residues include Asp10, Glu48, Asp70, and Asp134.

Belongs to the RNase H family. In terms of assembly, monomer. Mg(2+) is required as a cofactor.

Its subcellular location is the cytoplasm. It carries out the reaction Endonucleolytic cleavage to 5'-phosphomonoester.. In terms of biological role, endonuclease that specifically degrades the RNA of RNA-DNA hybrids. In Baumannia cicadellinicola subsp. Homalodisca coagulata, this protein is Ribonuclease H.